The chain runs to 92 residues: UPF0250 protein Pmen_3793 (92 aa).

It belongs to the UPF0250 family.

The protein is UPF0250 protein Pmen_3793 of Ectopseudomonas mendocina (strain ymp) (Pseudomonas mendocina).